We begin with the raw amino-acid sequence, 129 residues long: Small ribosomal subunit protein uS11 (129 aa).

Belongs to the universal ribosomal protein uS11 family. In terms of assembly, part of the 30S ribosomal subunit. Interacts with proteins S7 and S18. Binds to IF-3.

Functionally, located on the platform of the 30S subunit, it bridges several disparate RNA helices of the 16S rRNA. Forms part of the Shine-Dalgarno cleft in the 70S ribosome. The chain is Small ribosomal subunit protein uS11 from Lactobacillus gasseri (strain ATCC 33323 / DSM 20243 / BCRC 14619 / CIP 102991 / JCM 1131 / KCTC 3163 / NCIMB 11718 / NCTC 13722 / AM63).